Reading from the N-terminus, the 318-residue chain is Olfactory receptor 5G25 (318 aa).

Topologically, residues 1–25 are extracellular; it reads MMHRNQTVVTEFFFTGLTSSFHLQI. A glycan (N-linked (GlcNAc...) asparagine) is linked at N5. A helical transmembrane segment spans residues 26-46; it reads VLFLTFLCVYLATLLGNLGMI. Over 47-54 the chain is Cytoplasmic; it reads ILIHQDTR. Residues 55 to 75 traverse the membrane as a helical segment; it reads LHIPMYFFLSHLSFVDACSSS. Residues 76-99 lie on the Extracellular side of the membrane; the sequence is VISPKMLSDIFVDKKVISFLGCAI. The cysteines at positions 97 and 189 are disulfide-linked. A helical membrane pass occupies residues 100–120; that stretch reads QFCLFSQFVVTECFLLASMAY. Over 121–133 the chain is Cytoplasmic; that stretch reads DRYVAICKPLLYT. The helical transmembrane segment at 134 to 154 threads the bilayer; it reads LIMSQRVCVQLVIGPYSIGLI. Residues 155-196 are Extracellular-facing; the sequence is STVVHTTSAFILPYCGPNLINHFFCDLLPVLSLACADTQMNK. A helical transmembrane segment spans residues 197–217; it reads HLLFIMAGILGVFSGIIILVS. The Cytoplasmic portion of the chain corresponds to 218–237; sequence YVYIAITILKINSADGRRKA. The helical transmembrane segment at 238 to 258 threads the bilayer; that stretch reads FSTCSSHLTAVSILYGTLFFI. Residues 259–271 are Extracellular-facing; sequence YVRPSSSFSLDIN. A helical transmembrane segment spans residues 272–292; that stretch reads KVVSLFYTAVIPMLNPFIYSL. The Cytoplasmic segment spans residues 293–318; sequence RNKEVKDALIRTFEKKFCYSLQDKIL.

Belongs to the G-protein coupled receptor 1 family.

The protein resides in the cell membrane. Functionally, potential odorant receptor. In Mus musculus (Mouse), this protein is Olfactory receptor 5G25.